Consider the following 447-residue polypeptide: Probable glycine dehydrogenase (decarboxylating) subunit 1 (447 aa).

This sequence belongs to the GcvP family. N-terminal subunit subfamily. In terms of assembly, the glycine cleavage system is composed of four proteins: P, T, L and H. In this organism, the P 'protein' is a heterodimer of two subunits.

The enzyme catalyses N(6)-[(R)-lipoyl]-L-lysyl-[glycine-cleavage complex H protein] + glycine + H(+) = N(6)-[(R)-S(8)-aminomethyldihydrolipoyl]-L-lysyl-[glycine-cleavage complex H protein] + CO2. In terms of biological role, the glycine cleavage system catalyzes the degradation of glycine. The P protein binds the alpha-amino group of glycine through its pyridoxal phosphate cofactor; CO(2) is released and the remaining methylamine moiety is then transferred to the lipoamide cofactor of the H protein. The polypeptide is Probable glycine dehydrogenase (decarboxylating) subunit 1 (Macrococcus caseolyticus (strain JCSC5402) (Macrococcoides caseolyticum)).